The following is a 405-amino-acid chain: Arginine biosynthesis bifunctional protein ArgJ (405 aa).

Substrate is bound by residues threonine 152, lysine 178, threonine 189, glutamate 276, asparagine 400, and threonine 405. Catalysis depends on threonine 189, which acts as the Nucleophile.

It belongs to the ArgJ family. In terms of assembly, heterotetramer of two alpha and two beta chains.

It localises to the cytoplasm. The catalysed reaction is N(2)-acetyl-L-ornithine + L-glutamate = N-acetyl-L-glutamate + L-ornithine. It carries out the reaction L-glutamate + acetyl-CoA = N-acetyl-L-glutamate + CoA + H(+). The protein operates within amino-acid biosynthesis; L-arginine biosynthesis; L-ornithine and N-acetyl-L-glutamate from L-glutamate and N(2)-acetyl-L-ornithine (cyclic): step 1/1. It functions in the pathway amino-acid biosynthesis; L-arginine biosynthesis; N(2)-acetyl-L-ornithine from L-glutamate: step 1/4. Functionally, catalyzes two activities which are involved in the cyclic version of arginine biosynthesis: the synthesis of N-acetylglutamate from glutamate and acetyl-CoA as the acetyl donor, and of ornithine by transacetylation between N(2)-acetylornithine and glutamate. The sequence is that of Arginine biosynthesis bifunctional protein ArgJ from Pseudomonas syringae pv. syringae (strain B728a).